The following is a 398-amino-acid chain: 4-hydroxy-3-methylbut-2-en-1-yl diphosphate synthase (ferredoxin) (398 aa).

Residues Cys-306, Cys-309, Cys-340, and Glu-347 each contribute to the [4Fe-4S] cluster site.

It belongs to the IspG family. [4Fe-4S] cluster is required as a cofactor.

It carries out the reaction (2E)-4-hydroxy-3-methylbut-2-enyl diphosphate + 2 oxidized [2Fe-2S]-[ferredoxin] + H2O = 2-C-methyl-D-erythritol 2,4-cyclic diphosphate + 2 reduced [2Fe-2S]-[ferredoxin] + H(+). It participates in isoprenoid biosynthesis; isopentenyl diphosphate biosynthesis via DXP pathway; isopentenyl diphosphate from 1-deoxy-D-xylulose 5-phosphate: step 5/6. In terms of biological role, converts 2C-methyl-D-erythritol 2,4-cyclodiphosphate (ME-2,4cPP) into 1-hydroxy-2-methyl-2-(E)-butenyl 4-diphosphate. In Parasynechococcus marenigrum (strain WH8102), this protein is 4-hydroxy-3-methylbut-2-en-1-yl diphosphate synthase (ferredoxin).